The chain runs to 343 residues: Small ribosomal subunit biogenesis GTPase RsgA (343 aa).

Positions 116-275 constitute a CP-type G domain; sequence RGQLKPVAAN…LIDSPGIREF (160 aa). Residues 163 to 166 and 217 to 225 each bind GTP; these read NKAD and GQSGVGKSS. Zn(2+) contacts are provided by cysteine 299, cysteine 304, histidine 306, and cysteine 312.

Belongs to the TRAFAC class YlqF/YawG GTPase family. RsgA subfamily. In terms of assembly, monomer. Associates with 30S ribosomal subunit, binds 16S rRNA. The cofactor is Zn(2+).

It localises to the cytoplasm. Its function is as follows. One of several proteins that assist in the late maturation steps of the functional core of the 30S ribosomal subunit. Helps release RbfA from mature subunits. May play a role in the assembly of ribosomal proteins into the subunit. Circularly permuted GTPase that catalyzes slow GTP hydrolysis, GTPase activity is stimulated by the 30S ribosomal subunit. The chain is Small ribosomal subunit biogenesis GTPase RsgA from Pseudomonas fluorescens (strain ATCC BAA-477 / NRRL B-23932 / Pf-5).